The following is a 465-amino-acid chain: MKGVISQVMGPVVDVDFNDYLPKINEAIEVYFEVEGKKNRLILEVAAHLGDNRVRTIAMDMSEGLTRGLEATALGAPISVPVGEKVLGRIFNVVGDLIDEGEGVEFDKHWSIHRDPPPFEEQSTKSEIFETGIKVVDLLAPYAKGGKVGLFGGAGVGKTVIIMELIHNVAFKHSGYSVFAGVGERTREGNDLYHEMKESNVLDKVALCYGQMNEPPGARNRIALTGLTMAEYFRDEMGLDVLMFIDNIFRFSQSGAEMSALLGRIPSAVGYQPTLASEMGKFQERITSTKKGSITSVQAVYVPADDLTDPAPATVFAHLDATTVLNRAIAEKGIYPAVDPLDSTSRMLDPQILGEDHYKVARGVQAVLQKYKDLQDIIAILGMDELSEEDKLTVDRARKIERFLSQPFFVAEVFTGSPGKYVSLEENIAGFKGILDGKYDSLPEAAFYMVGNIDEALAKAEKLKA.

152–159 (GGAGVGKT) provides a ligand contact to ATP.

Belongs to the ATPase alpha/beta chains family. In terms of assembly, F-type ATPases have 2 components, CF(1) - the catalytic core - and CF(0) - the membrane proton channel. CF(1) has five subunits: alpha(3), beta(3), gamma(1), delta(1), epsilon(1). CF(0) has three main subunits: a(1), b(2) and c(9-12). The alpha and beta chains form an alternating ring which encloses part of the gamma chain. CF(1) is attached to CF(0) by a central stalk formed by the gamma and epsilon chains, while a peripheral stalk is formed by the delta and b chains.

The protein resides in the cell inner membrane. It catalyses the reaction ATP + H2O + 4 H(+)(in) = ADP + phosphate + 5 H(+)(out). In terms of biological role, produces ATP from ADP in the presence of a proton gradient across the membrane. The catalytic sites are hosted primarily by the beta subunits. This Campylobacter curvus (strain 525.92) protein is ATP synthase subunit beta.